The chain runs to 178 residues: Fatty-acid and retinol-binding protein 1 (178 aa).

The signal sequence occupies residues 1 to 16 (MYHRLILLALVGTTMA). 2 coiled-coil regions span residues 67–89 (DAAL…ELRN) and 130–153 (KQAA…ELKV).

It belongs to the fatty-acid and retinol-binding protein (FARBP) family. Post-translationally, not glycosylated.

It localises to the secreted. In terms of biological role, binds retinol. Also binds the fluorescent fatty acid 11-((5-dimethylaminonaphthalene-1-sulfonyl)amino)undecanoic acid (DAUDA). The long chain fatty acid oleic acid can act competitively to displace bound DAUDA and retinol. This is Fatty-acid and retinol-binding protein 1 from Brugia malayi (Filarial nematode worm).